Here is a 333-residue protein sequence, read N- to C-terminus: Chlorophyllide reductase 35.5 kDa chain (333 aa).

The disordered stretch occupies residues M1–P22. Residues G45–F50 and K74 contribute to the ATP site. S49 contacts Mg(2+). [4Fe-4S] cluster is bound by residues C130 and C165. N219–K220 is a binding site for ATP.

This sequence belongs to the NifH/BchL/ChlL family. In terms of assembly, homodimer. Chlorophyllide reductase is composed of three subunits; BchX, BchY and BchZ. [4Fe-4S] cluster serves as cofactor.

It carries out the reaction 3-deacetyl-3-vinylbacteriochlorophyllide a + 2 oxidized [2Fe-2S]-[ferredoxin] + ADP + phosphate = chlorophyllide a + 2 reduced [2Fe-2S]-[ferredoxin] + ATP + H2O + H(+). It catalyses the reaction bacteriochlorophyllide a + 2 oxidized [2Fe-2S]-[ferredoxin] + ADP + phosphate = 3-acetyl-3-devinylchlorophyllide a + 2 reduced [2Fe-2S]-[ferredoxin] + ATP + H2O + H(+). The catalysed reaction is 3-deacetyl-3-(1-hydroxyethyl)bacteriochlorophyllide a + 2 oxidized [2Fe-2S]-[ferredoxin] + ADP + phosphate = 3-devinyl-3-(1-hydroxyethyl)chlorophyllide a + 2 reduced [2Fe-2S]-[ferredoxin] + ATP + H2O + H(+). It participates in porphyrin-containing compound metabolism; bacteriochlorophyll biosynthesis. Converts chlorophylls (Chl) into bacteriochlorophylls (BChl) by reducing ring B of the tetrapyrrole. The polypeptide is Chlorophyllide reductase 35.5 kDa chain (bchX) (Rhodobacter capsulatus (strain ATCC BAA-309 / NBRC 16581 / SB1003)).